The sequence spans 282 residues: ATP phosphoribosyltransferase (282 aa).

It belongs to the ATP phosphoribosyltransferase family. Long subfamily. Requires Mg(2+) as cofactor.

The protein localises to the cytoplasm. It catalyses the reaction 1-(5-phospho-beta-D-ribosyl)-ATP + diphosphate = 5-phospho-alpha-D-ribose 1-diphosphate + ATP. It functions in the pathway amino-acid biosynthesis; L-histidine biosynthesis; L-histidine from 5-phospho-alpha-D-ribose 1-diphosphate: step 1/9. With respect to regulation, feedback inhibited by histidine. In terms of biological role, catalyzes the condensation of ATP and 5-phosphoribose 1-diphosphate to form N'-(5'-phosphoribosyl)-ATP (PR-ATP). Has a crucial role in the pathway because the rate of histidine biosynthesis seems to be controlled primarily by regulation of HisG enzymatic activity. The sequence is that of ATP phosphoribosyltransferase from Pyrobaculum aerophilum (strain ATCC 51768 / DSM 7523 / JCM 9630 / CIP 104966 / NBRC 100827 / IM2).